The primary structure comprises 209 residues: FMN-dependent NADH:quinone oxidoreductase (209 aa).

FMN contacts are provided by residues S18, 102 to 105, and 146 to 149; these read MYNF and SRGG.

The protein belongs to the azoreductase type 1 family. As to quaternary structure, homodimer. It depends on FMN as a cofactor.

The enzyme catalyses 2 a quinone + NADH + H(+) = 2 a 1,4-benzosemiquinone + NAD(+). It catalyses the reaction N,N-dimethyl-1,4-phenylenediamine + anthranilate + 2 NAD(+) = 2-(4-dimethylaminophenyl)diazenylbenzoate + 2 NADH + 2 H(+). Quinone reductase that provides resistance to thiol-specific stress caused by electrophilic quinones. Functionally, also exhibits azoreductase activity. Catalyzes the reductive cleavage of the azo bond in aromatic azo compounds to the corresponding amines. The polypeptide is FMN-dependent NADH:quinone oxidoreductase (Saccharophagus degradans (strain 2-40 / ATCC 43961 / DSM 17024)).